Here is a 245-residue protein sequence, read N- to C-terminus: tRNA1(Val) (adenine(37)-N6)-methyltransferase (245 aa).

The protein belongs to the methyltransferase superfamily. tRNA (adenine-N(6)-)-methyltransferase family.

It localises to the cytoplasm. It catalyses the reaction adenosine(37) in tRNA1(Val) + S-adenosyl-L-methionine = N(6)-methyladenosine(37) in tRNA1(Val) + S-adenosyl-L-homocysteine + H(+). Specifically methylates the adenine in position 37 of tRNA(1)(Val) (anticodon cmo5UAC). In Citrobacter koseri (strain ATCC BAA-895 / CDC 4225-83 / SGSC4696), this protein is tRNA1(Val) (adenine(37)-N6)-methyltransferase.